Here is a 238-residue protein sequence, read N- to C-terminus: UDP-2,3-diacylglucosamine hydrolase (238 aa).

The Mn(2+) site is built by D8, H10, D41, N78, and H113. 78 to 79 provides a ligand contact to substrate; sequence NR. Substrate is bound by residues D121, S159, N163, K166, and H194. The Mn(2+) site is built by H194 and H196.

The protein belongs to the LpxH family. Requires Mn(2+) as cofactor.

Its subcellular location is the cell inner membrane. The catalysed reaction is UDP-2-N,3-O-bis[(3R)-3-hydroxytetradecanoyl]-alpha-D-glucosamine + H2O = 2-N,3-O-bis[(3R)-3-hydroxytetradecanoyl]-alpha-D-glucosaminyl 1-phosphate + UMP + 2 H(+). Its pathway is glycolipid biosynthesis; lipid IV(A) biosynthesis; lipid IV(A) from (3R)-3-hydroxytetradecanoyl-[acyl-carrier-protein] and UDP-N-acetyl-alpha-D-glucosamine: step 4/6. Hydrolyzes the pyrophosphate bond of UDP-2,3-diacylglucosamine to yield 2,3-diacylglucosamine 1-phosphate (lipid X) and UMP by catalyzing the attack of water at the alpha-P atom. Involved in the biosynthesis of lipid A, a phosphorylated glycolipid that anchors the lipopolysaccharide to the outer membrane of the cell. The sequence is that of UDP-2,3-diacylglucosamine hydrolase from Shewanella halifaxensis (strain HAW-EB4).